We begin with the raw amino-acid sequence, 733 residues long: MKLILLYLAVVLCFVGKARSFRNGAGFYTSLGGQMRVFDFNKKTLDAKSSGGSKDYNLSDGGKSNSRKNLSPATGGSATQQSNLDDSHAPNLGKSETMLSLLGYLGAFRPVLSGLTSLPRVGGGAHGNIGLRAEISRNGVNLSGDSSARGSLNVNPLSGLSTKSGNDATVQGQQAAASGGSKHNVENSSLSTGSATSNKGADKPSEHLSNLFLKGLKGIVEPITSAAGGSVSSAVENLKAQIKKFIEPLTEDHGPTSTSASVSGDSSTSSRLDGHSSDGLSKVSGDDPTVQGHDVAASDGSKQNVEDSTLSTGSATSNEGDDKSSDNSSNTFREDLEKILEQITSAPGGSVSSAVENLKAQIKKFIEPLTEDHGPTSTSASVSGDSSTSSRLDGHSSDGLSKVSGDDPTVQGHDVAASDGSKQNVEDSTLSTGSATSNEGDDKSSDNSSNTFREDLEKILEQITSAPGGSVSTVNNPDEDRLISIIENLAGHIQQSVTEASQSAERPNAQSSNNLSGKLEPKYENPTNGSSSASSADKPYEEGMRKLLKFLEEQYGQTGTDASVSGMSSESSRSNVHLSDGFSMESGDDATVQGQQAAASGGPKQNVESSNSSTGSATSNGGGDSNEVRGPSSSAVDSTDSGDRGNLADKQGPGFNGPEGVGENNGGSFRAGSLDTGSKSDSGSHNLSSGSGSRSNVSTGGEPSDKNEPADPGVSGRVTCPTGKTQSGSPSVA.

The N-terminal stretch at 1-20 (MKLILLYLAVVLCFVGKARS) is a signal peptide. The segment at 48 to 91 (KSSGGSKDYNLSDGGKSNSRKNLSPATGGSATQQSNLDDSHAPN) is disordered. N57 is a glycosylation site (N-linked (GlcNAc...) asparagine). Residues 62–84 (GKSNSRKNLSPATGGSATQQSNL) are compositionally biased toward polar residues. N141 and N187 each carry an N-linked (GlcNAc...) asparagine glycan. Disordered stretches follow at residues 172–204 (GQQAAASGGSKHNVENSSLSTGSATSNKGADKP), 249–330 (LTED…NSSN), 369–450 (LTED…NSSN), and 496–733 (SVTE…PSVA). Positions 186–199 (ENSSLSTGSATSNK) are enriched in polar residues. Residues 256 to 270 (TSTSASVSGDSSTSS) show a composition bias toward low complexity. The span at 300-318 (GSKQNVEDSTLSTGSATSN) shows a compositional bias: polar residues. An N-linked (GlcNAc...) asparagine glycan is attached at N327. Low complexity predominate over residues 376 to 390 (TSTSASVSGDSSTSS). The segment covering 420 to 438 (GSKQNVEDSTLSTGSATSN) has biased composition (polar residues). Residues N447, N514, and N528 are each glycosylated (N-linked (GlcNAc...) asparagine). 2 stretches are compositionally biased toward polar residues: residues 496-516 (SVTEASQSAERPNAQSSNNLS) and 525-535 (NPTNGSSSASS). The segment covering 538 to 552 (KPYEEGMRKLLKFLE) has biased composition (basic and acidic residues). 2 stretches are compositionally biased toward low complexity: residues 563 to 574 (SVSGMSSESSRS) and 609 to 619 (SSNSSTGSATS). An N-linked (GlcNAc...) asparagine glycan is attached at N611. The span at 654–665 (GFNGPEGVGENN) shows a compositional bias: gly residues. The segment covering 677–701 (GSKSDSGSHNLSSGSGSRSNVSTGG) has biased composition (low complexity). 2 N-linked (GlcNAc...) asparagine glycosylation sites follow: N686 and N696. The segment covering 722 to 733 (TGKTQSGSPSVA) has biased composition (polar residues).

In terms of processing, N-glycosylated. Detected in terminal tubule cells of the submandibular gland (at protein level). Expressed in submandibular salivary glands of 3-day-old males but not adults. Expression in adult submandibular glands is restricted to females. Isoform 5 is expressed in both 3-day-old and adult sublingual glands.

The protein localises to the secreted. The chain is Submandibular gland protein C (Muc19) from Mus musculus (Mouse).